The primary structure comprises 206 residues: Small ribosomal subunit protein uS4 (206 aa).

An S4 RNA-binding domain is found at 96–156; that stretch reads TRLDNVVYRM…EKSRTQARIK (61 aa).

The protein belongs to the universal ribosomal protein uS4 family. In terms of assembly, part of the 30S ribosomal subunit. Contacts protein S5. The interaction surface between S4 and S5 is involved in control of translational fidelity.

One of the primary rRNA binding proteins, it binds directly to 16S rRNA where it nucleates assembly of the body of the 30S subunit. In terms of biological role, with S5 and S12 plays an important role in translational accuracy. The chain is Small ribosomal subunit protein uS4 from Shewanella halifaxensis (strain HAW-EB4).